We begin with the raw amino-acid sequence, 468 residues long: MPCSVEDKTGLCGSRYSVMIPELQESVIFSEDSRHYNEKQTRRQRKSSADIISTVEFNNTGELLATGDKGGRVVIFQREQENKNQPHRRGEYNVYSTFQSHEPEFDYLKSLEIEEKINKIRWLPQQNAAYFLLSTNDKTVKLWKVSERDKRPEGYNLKDEEGRIRDPCTITSLRVPVLRPMDLMVEATPRRVFSNAHTYHINSISVNSDYETYMSADDLRINLWNLEITNRSFNIVDIKPTNMEELTEVITAAEFHPHNCNTFVYSSSKGTIRLCDMRSSALCDKHSKLFEEPEDPSNRSFFSEIISSISDVKFNHSGRYIMTRDYLTVKVWDLNMENRPIETYQVHDYLRSKLCSLYENDCIFDKFECVWNGSDSVIMTGSYNNFFRMFDRNTKRDVTLEASRENSKPRAILKPRKVCVGGKRRKDEISVDSLDFSKKILHTAWHPSENIIAVAATNNLYIFQDKVN.

WD repeat units lie at residues 47–86, 112–153, 196–234, 245–285, 304–342, 359–400, and 435–468; these read SSAD…KNQP, EIEE…KRPE, AHTY…RSFN, ELTE…LCDK, EIIS…RPIE, ENDC…DVTL, and DFSK…DKVN.

This sequence belongs to the phosphatase 2A regulatory subunit B family. As to quaternary structure, PP2A consists of a common heterodimeric core enzyme, composed of a 36 kDa catalytic subunit (subunit C) and a 65 kDa constant regulatory subunit (PR65 or subunit A), that associates with a variety of regulatory subunits.

It localises to the cytoplasm. Its subcellular location is the cytoskeleton. It is found in the membrane. Its function is as follows. The B regulatory subunit might modulate substrate selectivity and catalytic activity, and might also direct the localization of the catalytic enzyme to a particular subcellular compartment. Negatively controls the initiation of oocyte maturation. This Xenopus laevis (African clawed frog) protein is Serine/threonine-protein phosphatase 2A 55 kDa regulatory subunit B beta isoform (ppp2r2b).